Consider the following 509-residue polypeptide: Transcription factor atf-7 (509 aa).

Residues Thr283 to Ser303 are compositionally biased toward polar residues. 2 disordered regions span residues Thr283–Ile318 and Asn337–Arg400. Positions Ser308–Ile318 are enriched in basic and acidic residues. The span at Asn337–Asn364 shows a compositional bias: low complexity. Over residues Pro390–Arg400 the composition is skewed to basic and acidic residues. In terms of domain architecture, bZIP spans Asp391–Leu464. The interval Arg393 to Lys413 is basic motif. Residues Met419–Val450 are leucine-zipper.

It belongs to the bZIP family. In terms of assembly, interacts with serine/threonine kinase pmk-1; perhaps in a manner dependent on dual specificity protein kinase sek-1. Expressed in intestinal cells.

It is found in the nucleus. Its subcellular location is the chromosome. Its function is as follows. Transcription factor which regulates the transcription of various genes, including those involved in innate immunity and oxidative stress responses. Binds to promoter regions of genes, probably at 5'-[GACGTCA]-3' consensus sequences. Together with transcription factor daf-19, involved in regulation of the serotonergic response of ADF neurons to pathogenic food. Modulates response to infection by the Gram-negative bacterium P.aeruginosa, acting downstream of the p38 signal transduction pathway effector serine/threonine kinase pmk-1. May act with transcription factor elt-2 to control p38 gene induction in response to bacterial infection. May be phosphorylated by pmk-1. Regulates transcription of the metallothionein gene, mtl-1, perhaps acting downstream of pmk-1. The polypeptide is Transcription factor atf-7 (Caenorhabditis elegans).